The following is a 265-amino-acid chain: Hydroxyethylthiazole kinase (265 aa).

Methionine 43 provides a ligand contact to substrate. Positions 118 and 165 each coordinate ATP. Glycine 192 contacts substrate.

The protein belongs to the Thz kinase family. Mg(2+) serves as cofactor.

It carries out the reaction 5-(2-hydroxyethyl)-4-methylthiazole + ATP = 4-methyl-5-(2-phosphooxyethyl)-thiazole + ADP + H(+). Its pathway is cofactor biosynthesis; thiamine diphosphate biosynthesis; 4-methyl-5-(2-phosphoethyl)-thiazole from 5-(2-hydroxyethyl)-4-methylthiazole: step 1/1. Catalyzes the phosphorylation of the hydroxyl group of 4-methyl-5-beta-hydroxyethylthiazole (THZ). This chain is Hydroxyethylthiazole kinase, found in Pyrococcus furiosus (strain ATCC 43587 / DSM 3638 / JCM 8422 / Vc1).